The chain runs to 895 residues: Receptor-like protein kinase FERONIA (895 aa).

An N-terminal signal peptide occupies residues 1 to 27 (MKITEGRFRLSLLLLLLLISAATLISA). The Extracellular segment spans residues 28 to 447 (ADYSPTEKIL…TTRKSKSNTA (420 aa)). 10 N-linked (GlcNAc...) asparagine glycosylation sites follow: Asn-46, Asn-124, Asn-142, Asn-171, Asn-219, Asn-269, Asn-305, Asn-330, Asn-345, and Asn-410. A helical transmembrane segment spans residues 448–468 (IIAGAASGAVVLALIIGFCVF). Residues 469-895 (GAYRRRKRGD…FSQIMNPKGR (427 aa)) are Cytoplasmic-facing. In terms of domain architecture, Protein kinase spans 536–810 (FDESRVLGVG…GDVLWNLEFA (275 aa)). ATP is bound by residues 542–550 (LGVGGFGKV) and Lys-565. Asp-661 serves as the catalytic Proton acceptor. The segment at 844-895 (NDKSSDVYEGNVTDSRSSGIDMSIGGRSLASEDSDGLTPSAVFSQIMNPKGR) is disordered. Phosphoserine occurs at positions 858, 866, 871, and 874. The segment covering 884–895 (AVFSQIMNPKGR) has biased composition (polar residues).

It belongs to the protein kinase superfamily. Ser/Thr protein kinase family. As to quaternary structure, interacts with ROPGEF1. Interacts with RALF1; triggering phosphorylation status and subsequent activation. Interacts with LRE and LLG1. Interacts, via its extracellular domain, with FERONIA at the synergid cell surface. Autophosphorylated. Post-translationally, phosphorylated at Ser-858, Ser-871 and Ser-874 upon activation by RALF1. As to expression, expressed in leaves, buds, flowers, siliques, young ovules primordia, and young anthers with immature pollen, but not detected in mature pollen. Highest expression in the synergid cells of the female gametophyte.

The protein localises to the cell membrane. The enzyme catalyses L-seryl-[protein] + ATP = O-phospho-L-seryl-[protein] + ADP + H(+). The catalysed reaction is L-threonyl-[protein] + ATP = O-phospho-L-threonyl-[protein] + ADP + H(+). In terms of biological role, receptor-like protein kinase that mediates the female control of male gamete delivery during fertilization, including growth cessation of compatible pollen tubes ensuring a reproductive isolation barriers, by regulating MLO7 subcellular polarization upon pollen tube perception in the female gametophyte synergids. Required for cell elongation during vegetative growth, mostly in a brassinosteroids- (BR-) independent manner. Acts as an upstream regulator for the Rac/Rop-signaling pathway that controls ROS-mediated root hair development. Seems to regulate a cross-talk between brassinosteroids and ethylene signaling pathways during hypocotyl elongation. Negative regulator of brassinosteroid response in light-grown hypocotyls, but required for brassinosteroid response in etiolated seedlings. Mediates sensitivity to powdery mildew (e.g. Golovinomyces orontii). Positive regulator of auxin-promoted growth that represses the abscisic acid (ABA) signaling via the activation of ABI2 phosphatase. Required for RALF1-mediated extracellular alkalinization in a signaling pathway preventing cell expansion. The protein is Receptor-like protein kinase FERONIA of Arabidopsis thaliana (Mouse-ear cress).